A 460-amino-acid chain; its full sequence is Glucan endo-1,3-beta-D-glucosidase (460 aa).

Residues Met1–Ser26 form the signal peptide. Glu123 serves as the catalytic Proton donor. Catalysis depends on Glu268, which acts as the Nucleophile. Residues Asn352 to Ser371 are disordered. The N-linked (GlcNAc...) asparagine glycan is linked to Asn355. Cys373 and Cys435 form a disulfide bridge. A glycan (N-linked (GlcNAc...) asparagine) is linked at Asn447.

The protein belongs to the glycosyl hydrolase 17 family. In terms of assembly, homodimer. Post-translationally, glycosylated. In terms of processing, contains two additional disulfide bonds, but it is unclear if they are between the pairs Cys-392-Cys-398 and Cys-407-Cys-453 (PudMed:18096638) or between the pairs Cys-392-Cys-453 and Cys-398-Cys-407 (PudMed:12392450). Expressed only in pollen.

The protein resides in the secreted. It catalyses the reaction Hydrolysis of (1-&gt;3)-beta-D-glucosidic linkages in (1-&gt;3)-beta-D-glucans.. The sequence is that of Glucan endo-1,3-beta-D-glucosidase (OLE9) from Olea europaea (Common olive).